A 359-amino-acid polypeptide reads, in one-letter code: Dual-specificity RNA methyltransferase RlmN (359 aa).

Glu-98 acts as the Proton acceptor in catalysis. A Radical SAM core domain is found at 104–329 (EPKRGTLCIS…LEHGLTATIR (226 aa)). A disulfide bridge connects residues Cys-111 and Cys-340. Residues Cys-118, Cys-122, and Cys-125 each coordinate [4Fe-4S] cluster. S-adenosyl-L-methionine is bound by residues 166–167 (GE), Ser-198, 220–222 (SLH), and Asn-297. Residue Cys-340 is the S-methylcysteine intermediate of the active site.

This sequence belongs to the radical SAM superfamily. RlmN family. It depends on [4Fe-4S] cluster as a cofactor.

The protein resides in the cytoplasm. The catalysed reaction is adenosine(2503) in 23S rRNA + 2 reduced [2Fe-2S]-[ferredoxin] + 2 S-adenosyl-L-methionine = 2-methyladenosine(2503) in 23S rRNA + 5'-deoxyadenosine + L-methionine + 2 oxidized [2Fe-2S]-[ferredoxin] + S-adenosyl-L-homocysteine. It carries out the reaction adenosine(37) in tRNA + 2 reduced [2Fe-2S]-[ferredoxin] + 2 S-adenosyl-L-methionine = 2-methyladenosine(37) in tRNA + 5'-deoxyadenosine + L-methionine + 2 oxidized [2Fe-2S]-[ferredoxin] + S-adenosyl-L-homocysteine. Specifically methylates position 2 of adenine 2503 in 23S rRNA and position 2 of adenine 37 in tRNAs. m2A2503 modification seems to play a crucial role in the proofreading step occurring at the peptidyl transferase center and thus would serve to optimize ribosomal fidelity. The polypeptide is Dual-specificity RNA methyltransferase RlmN (Halorhodospira halophila (strain DSM 244 / SL1) (Ectothiorhodospira halophila (strain DSM 244 / SL1))).